A 98-amino-acid polypeptide reads, in one-letter code: NADH-ubiquinone oxidoreductase chain 4L (98 aa).

A run of 3 helical transmembrane segments spans residues 1-21 (MSMVYINIFLAFTMSLMGLLM), 29-49 (SLLCLEGMMLSLFIMMAVAIL), and 61-81 (IILLVFAACEAALGLSLLVMV).

This sequence belongs to the complex I subunit 4L family. In terms of assembly, core subunit of respiratory chain NADH dehydrogenase (Complex I) which is composed of 45 different subunits.

It is found in the mitochondrion inner membrane. The enzyme catalyses a ubiquinone + NADH + 5 H(+)(in) = a ubiquinol + NAD(+) + 4 H(+)(out). Functionally, core subunit of the mitochondrial membrane respiratory chain NADH dehydrogenase (Complex I) which catalyzes electron transfer from NADH through the respiratory chain, using ubiquinone as an electron acceptor. Part of the enzyme membrane arm which is embedded in the lipid bilayer and involved in proton translocation. The chain is NADH-ubiquinone oxidoreductase chain 4L (MT-ND4L) from Puma concolor (Mountain lion).